The primary structure comprises 623 residues: Indolepyruvate oxidoreductase subunit IorA (623 aa).

Cysteine 573, cysteine 576, cysteine 579, cysteine 585, cysteine 602, cysteine 605, cysteine 608, and cysteine 612 together coordinate [4Fe-4S] cluster. A 4Fe-4S ferredoxin-type domain is found at 593–622 (EKVSIDQSLCVGCAVCAKICPNRAIKPAKS).

As to quaternary structure, heterodimer of the IorA and IorB subunits. It depends on [4Fe-4S] cluster as a cofactor.

The catalysed reaction is indole-3-pyruvate + 2 oxidized [2Fe-2S]-[ferredoxin] + CoA = (indol-3-yl)acetyl-CoA + 2 reduced [2Fe-2S]-[ferredoxin] + CO2 + H(+). Catalyzes the ferredoxin-dependent oxidative decarboxylation of arylpyruvates. In Archaeoglobus fulgidus (strain ATCC 49558 / DSM 4304 / JCM 9628 / NBRC 100126 / VC-16), this protein is Indolepyruvate oxidoreductase subunit IorA (iorA).